Consider the following 151-residue polypeptide: Troponin C, isoallergen Bla g 6.0101 (151 aa).

EF-hand domains lie at 7-42, 43-78, 83-118, and 119-151; these read EQIQLLKKAFDAFDREKKGCISTEMVGTILEMLGHR, LDDDMLQEIIAEVDADGSGELEFEEFVSLASRFLVE, AMQQELREAFRLYDKEGNGYITTNVLREILKELDDK, and ITAEDLDMMIEEIDSDGSGTVDFDEFMEVMTGE. Residues D56, D58, S60, E62, and E67 each contribute to the Ca(2+) site. Residues D132, D134, S136, T138, and E143 each contribute to the Ca(2+) site.

Belongs to the troponin C family.

In terms of biological role, troponin is the central regulatory protein of striated muscle contraction. It consists of three components: Troponin-I (Tn-I) which is the inhibitor of actomyosin ATPase, Troponin-T (Tn-T) which contains the binding site for tropomyosin and Troponin-C (Tn-C). The binding of calcium to Tn-C abolishes the inhibitory action of Tn on actin filaments. In Blattella germanica (German cockroach), this protein is Troponin C, isoallergen Bla g 6.0101.